The sequence spans 451 residues: Enolase (451 aa).

Q163 is a binding site for (2R)-2-phosphoglycerate. The Proton donor role is filled by E205. Mg(2+) is bound by residues D258, E308, and D335. Residues K360, R389, S390, and K411 each contribute to the (2R)-2-phosphoglycerate site. Residue K360 is the Proton acceptor of the active site.

It belongs to the enolase family. The cofactor is Mg(2+).

Its subcellular location is the cytoplasm. The protein localises to the secreted. It localises to the cell surface. The catalysed reaction is (2R)-2-phosphoglycerate = phosphoenolpyruvate + H2O. It participates in carbohydrate degradation; glycolysis; pyruvate from D-glyceraldehyde 3-phosphate: step 4/5. Its function is as follows. Catalyzes the reversible conversion of 2-phosphoglycerate (2-PG) into phosphoenolpyruvate (PEP). It is essential for the degradation of carbohydrates via glycolysis. The protein is Enolase of Mycoplasma mycoides subsp. mycoides SC (strain CCUG 32753 / NCTC 10114 / PG1).